Here is a 65-residue protein sequence, read N- to C-terminus: Muscarinic toxin-like protein 3 (65 aa).

4 disulfides stabilise this stretch: cysteine 3-cysteine 24, cysteine 17-cysteine 41, cysteine 45-cysteine 57, and cysteine 58-cysteine 63.

As to quaternary structure, homodimer; non-covalently linked. In terms of tissue distribution, expressed by the venom gland.

It localises to the secreted. In terms of biological role, antagonist of muscle and neuronal nicotinic acetylcholine receptors (nAChR) with highest affinity for neuronal alpha-7/CHRNA7 nAChRs. This chain is Muscarinic toxin-like protein 3, found in Naja kaouthia (Monocled cobra).